The following is a 184-amino-acid chain: Ribosome maturation factor RimM (184 aa).

Residues 101-174 (PDEYYDHQLV…RVVIADRPGL (74 aa)) enclose the PRC barrel domain.

This sequence belongs to the RimM family. In terms of assembly, binds ribosomal protein uS19.

It is found in the cytoplasm. In terms of biological role, an accessory protein needed during the final step in the assembly of 30S ribosomal subunit, possibly for assembly of the head region. Essential for efficient processing of 16S rRNA. May be needed both before and after RbfA during the maturation of 16S rRNA. It has affinity for free ribosomal 30S subunits but not for 70S ribosomes. The sequence is that of Ribosome maturation factor RimM from Nocardioides sp. (strain ATCC BAA-499 / JS614).